Consider the following 376-residue polypeptide: Heat-inducible transcription repressor HrcA (376 aa).

The protein belongs to the HrcA family.

Functionally, negative regulator of class I heat shock genes (grpE-dnaK-dnaJ and groELS operons). Prevents heat-shock induction of these operons. This is Heat-inducible transcription repressor HrcA from Chloroflexus aggregans (strain MD-66 / DSM 9485).